The chain runs to 458 residues: MKKQNPWISLSEEEKNQIFNFSESYKKFISKFKTEREVTSYALDKAKKRGFIDAEEKKNLIPGDKIFYTCREKSVAFAIIGKNPIENGMNLIVSHTDSPRLDAKPSPISEENELAFLKTNYYGGIKKYQWLSTPLSIRGVVFLKNGEKVEINIGDNENDPVFVIPDILPHLDKKIQRNKKSDEIIEGENLKILIGSLPIESKEQDKVKLGTLQLIKEKYKIEEEDFVSSEIEIVPAGTAKDVGFDKALIGAYGQDDKICAYASLEAIFDLEEIPSKTAICFLVDKEEIGSTGSTGLDSRYLEYFVSDMIFKIKKSEYNNLQVQKALWNSKSISADVCAAINPIFNSVHDAQNAPKLGYGIPIMKYTGHGGKVMASDADAELVSYIRQLLNKNNIAWQVATLGKVEEGGGGTVAKFLASYGIRTIDMGPAVISMHSPMEITSKFDLYNAYLAYKAFYKE.

Residues His-95, His-170, and His-434 each contribute to the Zn(2+) site.

It belongs to the peptidase M18 family. Requires Zn(2+) as cofactor.

The sequence is that of Probable M18 family aminopeptidase 1 from Borrelia garinii subsp. bavariensis (strain ATCC BAA-2496 / DSM 23469 / PBi) (Borreliella bavariensis).